The sequence spans 335 residues: Cell division protein ZipA (335 aa).

Topologically, residues 1-4 (MDLN) are periplasmic. A helical transmembrane segment spans residues 5–25 (AILIILGVIALIILVAHGIWS). Residues 26-335 (NRREKSQYFE…AERDYLARVS (310 aa)) lie on the Cytoplasmic side of the membrane.

It belongs to the ZipA family. As to quaternary structure, interacts with FtsZ via their C-terminal domains.

It localises to the cell inner membrane. In terms of biological role, essential cell division protein that stabilizes the FtsZ protofilaments by cross-linking them and that serves as a cytoplasmic membrane anchor for the Z ring. Also required for the recruitment to the septal ring of downstream cell division proteins. This Histophilus somni (strain 2336) (Haemophilus somnus) protein is Cell division protein ZipA.